Consider the following 276-residue polypeptide: uncharacterized protein (276 aa).

A run of 10 helical transmembrane segments spans residues 5–25 (IVLALTVTFWGLAFTAIKYSV), 31–51 (IAIASLRFAIANTLFAVIIIL), 63–83 (VFALGIFGVSVYHVFLNLGEV), 89–109 (VASVVISLAPIFVLILSAIFL), 119–139 (VGIIIAFLGVVVISEPSYANI), 142–162 (IALVMVSTVAAAIYTTFGKSL), 168–188 (PITLTSNAMVLGSIPLYPFLP), 200–220 (LIGSIVFLGIFSTFFGYLGWY), 231–251 (ASVFLLAIPVVSLLAGNILLA), and 253–273 (PLTLRTVAGSGLVLLGIYIVV). 2 consecutive EamA domains span residues 12–133 (TFWG…VISE) and 150–274 (VAAA…IVVR).

The protein belongs to the EamA transporter family.

It localises to the cell membrane. This is an uncharacterized protein from Archaeoglobus fulgidus (strain ATCC 49558 / DSM 4304 / JCM 9628 / NBRC 100126 / VC-16).